The chain runs to 148 residues: MTRVIIDGDACPVVDSVIELTTGTGIFVTILRSFSHYSNKVLPNHVETIYIDDGPDAVDYKIVKLATPEDIVITQDYGLASLLLSKVKIVMHHKGHLYRSSNIDMLLQQRYNNAQIRKQGGRHKGPPPFSKEDKKQFERAFKSVIKQL.

It belongs to the UPF0178 family.

This is UPF0178 protein SH2212 from Staphylococcus haemolyticus (strain JCSC1435).